The sequence spans 146 residues: Hemoglobin subunit beta (146 aa).

N-acetylvaline is present on V1. Residues 2-146 form the Globin domain; the sequence is HLTPEEKALV…VANALAHKYH (145 aa). K59 bears the N6-acetyllysine mark. H63 contributes to the heme b binding site. At K82 the chain carries N6-acetyllysine. Position 92 (H92) interacts with heme b. The residue at position 93 (C93) is an S-nitrosocysteine. At K144 the chain carries N6-acetyllysine.

This sequence belongs to the globin family. As to quaternary structure, heterotetramer of two alpha chains and two beta chains. As to expression, red blood cells.

Functionally, involved in oxygen transport from the lung to the various peripheral tissues. The sequence is that of Hemoglobin subunit beta (HBB) from Trichechus inunguis (Amazon manatee).